The chain runs to 331 residues: tRNA uridine(34) hydroxylase (331 aa).

The 95-residue stretch at T123–S217 folds into the Rhodanese domain. C177 functions as the Cysteine persulfide intermediate in the catalytic mechanism. The interval K293–E331 is disordered. Over residues A307–H323 the composition is skewed to basic residues.

This sequence belongs to the TrhO family.

It catalyses the reaction uridine(34) in tRNA + AH2 + O2 = 5-hydroxyuridine(34) in tRNA + A + H2O. Its function is as follows. Catalyzes oxygen-dependent 5-hydroxyuridine (ho5U) modification at position 34 in tRNAs. The chain is tRNA uridine(34) hydroxylase from Hahella chejuensis (strain KCTC 2396).